A 410-amino-acid polypeptide reads, in one-letter code: Multifunctional CCA protein (410 aa).

2 residues coordinate ATP: Gly8 and Arg11. CTP is bound by residues Gly8 and Arg11. The Mg(2+) site is built by Glu21 and Asp23. ATP is bound by residues Arg91, Arg137, and Arg140. Positions 91, 137, and 140 each coordinate CTP. In terms of domain architecture, HD spans 228 to 329 (TLLHQFLCLK…WKLFKSLDIL (102 aa)).

This sequence belongs to the tRNA nucleotidyltransferase/poly(A) polymerase family. Bacterial CCA-adding enzyme type 1 subfamily. In terms of assembly, monomer. Can also form homodimers and oligomers. Requires Mg(2+) as cofactor. The cofactor is Ni(2+).

The enzyme catalyses a tRNA precursor + 2 CTP + ATP = a tRNA with a 3' CCA end + 3 diphosphate. It carries out the reaction a tRNA with a 3' CCA end + 2 CTP + ATP = a tRNA with a 3' CCACCA end + 3 diphosphate. Its function is as follows. Catalyzes the addition and repair of the essential 3'-terminal CCA sequence in tRNAs without using a nucleic acid template. Adds these three nucleotides in the order of C, C, and A to the tRNA nucleotide-73, using CTP and ATP as substrates and producing inorganic pyrophosphate. tRNA 3'-terminal CCA addition is required both for tRNA processing and repair. Also involved in tRNA surveillance by mediating tandem CCA addition to generate a CCACCA at the 3' terminus of unstable tRNAs. While stable tRNAs receive only 3'-terminal CCA, unstable tRNAs are marked with CCACCA and rapidly degraded. This is Multifunctional CCA protein from Alcanivorax borkumensis (strain ATCC 700651 / DSM 11573 / NCIMB 13689 / SK2).